The primary structure comprises 338 residues: Fructose-1,6-bisphosphatase class 1 (338 aa).

4 residues coordinate Mg(2+): E92, D115, L117, and D118. Residues 118 to 121, N211, Y244, and K274 each bind substrate; that span reads DGSS. E280 is a Mg(2+) binding site.

This sequence belongs to the FBPase class 1 family. As to quaternary structure, homotetramer. The cofactor is Mg(2+).

The protein localises to the cytoplasm. The enzyme catalyses beta-D-fructose 1,6-bisphosphate + H2O = beta-D-fructose 6-phosphate + phosphate. It functions in the pathway carbohydrate biosynthesis; gluconeogenesis. This chain is Fructose-1,6-bisphosphatase class 1, found in Photobacterium profundum (strain SS9).